A 320-amino-acid polypeptide reads, in one-letter code: MGTPFKMERGVKYRDAAKTSIIPVKNIDPNQELLKKPEWMKIKLPANSAKIDSIKNGMRRHGLHSVCEEASCPNLHECFNHGTATFMILGAICTRRCPFCDVAHGKPLPPDPEEPRKLAETIQDMKLRYVVITSVDRDDLPDRGAGHFAECVKEIRQLNPNIKIEILVPDFRGRIEQALDKLKDNPPDVFNHNLENVPRLYREIRPGADYQWSLKLLKDFKAMFPHIPTKSGLMVGLGETNEEILQVMQDLRDHGVTMLTLGQYLQPSRHHLPVARYVPPAEFDEFRDKAQAMGFEHAACGPFVRSSYHADLQAKGEIVK.

The [4Fe-4S] cluster site is built by cysteine 67, cysteine 72, cysteine 78, cysteine 93, cysteine 97, cysteine 100, and serine 307. Residues 79–296 (FNHGTATFMI…RDKAQAMGFE (218 aa)) enclose the Radical SAM core domain.

Belongs to the radical SAM superfamily. Lipoyl synthase family. It depends on [4Fe-4S] cluster as a cofactor.

Its subcellular location is the cytoplasm. It catalyses the reaction [[Fe-S] cluster scaffold protein carrying a second [4Fe-4S](2+) cluster] + N(6)-octanoyl-L-lysyl-[protein] + 2 oxidized [2Fe-2S]-[ferredoxin] + 2 S-adenosyl-L-methionine + 4 H(+) = [[Fe-S] cluster scaffold protein] + N(6)-[(R)-dihydrolipoyl]-L-lysyl-[protein] + 4 Fe(3+) + 2 hydrogen sulfide + 2 5'-deoxyadenosine + 2 L-methionine + 2 reduced [2Fe-2S]-[ferredoxin]. It participates in protein modification; protein lipoylation via endogenous pathway; protein N(6)-(lipoyl)lysine from octanoyl-[acyl-carrier-protein]: step 2/2. In terms of biological role, catalyzes the radical-mediated insertion of two sulfur atoms into the C-6 and C-8 positions of the octanoyl moiety bound to the lipoyl domains of lipoate-dependent enzymes, thereby converting the octanoylated domains into lipoylated derivatives. The protein is Lipoyl synthase of Pasteurella multocida (strain Pm70).